Consider the following 273-residue polypeptide: Phosphatidylglycerol--prolipoprotein diacylglyceryl transferase (273 aa).

The next 7 helical transmembrane spans lie at 21–41 (VSVRWYGLMYLVGFMFALWLA), 60–80 (LLFAGFLGVVIGGRVGYVIFY), 95–115 (VWTGGMSFHGGLLGVITAMFW), 124–144 (FFGVADFVAPLVPFGLGMGRM), 176–196 (SQLYEMFLEGIVLFFILNWFI), 203–223 (GAVSGLFLAGYGTFRFLVEFV), and 237–257 (ISMGQILSSPMIILGILMMVW). R143 contacts a 1,2-diacyl-sn-glycero-3-phospho-(1'-sn-glycerol).

This sequence belongs to the Lgt family.

The protein localises to the cell inner membrane. It catalyses the reaction L-cysteinyl-[prolipoprotein] + a 1,2-diacyl-sn-glycero-3-phospho-(1'-sn-glycerol) = an S-1,2-diacyl-sn-glyceryl-L-cysteinyl-[prolipoprotein] + sn-glycerol 1-phosphate + H(+). Its pathway is protein modification; lipoprotein biosynthesis (diacylglyceryl transfer). Functionally, catalyzes the transfer of the diacylglyceryl group from phosphatidylglycerol to the sulfhydryl group of the N-terminal cysteine of a prolipoprotein, the first step in the formation of mature lipoproteins. The polypeptide is Phosphatidylglycerol--prolipoprotein diacylglyceryl transferase (Vibrio campbellii (strain ATCC BAA-1116)).